A 275-amino-acid polypeptide reads, in one-letter code: MQNITDSWFVQGMIKATSDAWLKGWDERNGGNLTLRLDEADIAPFAANFHEKPRYIALSQPMPLLANTPFIVTGSGKFFRNVQLDPAANLGVVKIDSDGAGYHILWGLTHDAVPTSELPAHFLSHCERIKATHGKDRVIMHCHATNLIALTYVLENNTALITRKLWEGSTECLVVFPDGVGILPWMVPGTDEIGQATAQEMQKHSLVLWPFHGVFGSGPTLDETFGLIDTAEKSAEVLVKIYSMGGMKQTITREELVALGKRFGVTPLASAVALY.

The active site involves Glu-117. Residues His-141, His-143, and His-212 each coordinate Zn(2+).

The protein belongs to the aldolase class II family. RhaD subfamily. Homotetramer. The cofactor is Zn(2+).

It localises to the cytoplasm. The catalysed reaction is L-rhamnulose 1-phosphate = (S)-lactaldehyde + dihydroxyacetone phosphate. The protein operates within carbohydrate degradation; L-rhamnose degradation; glycerone phosphate from L-rhamnose: step 3/3. In terms of biological role, catalyzes the reversible cleavage of L-rhamnulose-1-phosphate to dihydroxyacetone phosphate (DHAP) and L-lactaldehyde. The polypeptide is Rhamnulose-1-phosphate aldolase (Salmonella heidelberg (strain SL476)).